The following is a 564-amino-acid chain: MNSSSKLIAVINGFRNSGRFCDINIVINDERINAHKLILSGASEYFSILFSNNFIDSNEYEVNLSHLDYQSVNDLIDYIYGIPLSLTNDNVKYILSTADFLQIGSAITECENYILKNLCSKNCIDFYIYADKYNNKKIESASFNTILQNILRLINDENFKYLTEESMIKILSDDMLNIKNEDFAPLILIKWLESTQQPCTVELLKCLRISLLSPQVIKSLYSHRLVSSIYECITFLNNIAFLDESFPRYHSIELISIGISNSRDKISINCYNHKKNTWEMISSRRYRCSFAVAVLDNIIYMMGGYDQSPYRSSKVIAYNTCTNSWIYDIPELKYPRSNCGGLADDEYIYCIGGIRDQDSSLTSSIDKWKPSKPYWQKYAKMREPKCDMGVAMLNGLIYVIGGIVKGDTCTDALESLSEDGWMKHQRLPIKMSNMSTIVHDGKIYISGGYNNSSVVNVISNLVLSYNSIYDEWTKLSSLNIPRINPALWSTHNKLYVGGGISDDVRTNTSETYDKEKDCWTLDNGHVLPRNYIMYKCEPIKHKYPLEKTQYTNDFLKYLESFIGS.

Residues 21–88 enclose the BTB domain; the sequence is CDINIVINDE…IYGIPLSLTN (68 aa). The 97-residue stretch at 123-219 folds into the BACK domain; it reads CIDFYIYADK…SLLSPQVIKS (97 aa). Kelch repeat units lie at residues 252 to 297, 298 to 346, 347 to 395, 397 to 441, and 442 to 492; these read IELI…VLDN, IIYM…ADDE, YIYC…MLNG, IYVI…VHDG, and KIYI…STHN.

Interacts (via BTB domain) with host CUL3.

It localises to the host cytoplasm. Functionally, probable substrate-specific adapter of CUL3-containing E3 ubiquitin-protein ligases which mediate the ubiquitination and subsequent proteasomal degradation of host target proteins. In Bos taurus (Bovine), this protein is Kelch repeat and BTB domain-containing protein 1 (KBTB1).